Here is a 161-residue protein sequence, read N- to C-terminus: Nucleotide-binding protein Tbd_1846 (161 aa).

This sequence belongs to the YajQ family.

Its function is as follows. Nucleotide-binding protein. The polypeptide is Nucleotide-binding protein Tbd_1846 (Thiobacillus denitrificans (strain ATCC 25259 / T1)).